A 263-amino-acid chain; its full sequence is Thymidylate kinase (263 aa).

The transit peptide at 1-51 (MKRICSVSSVQLFSRSFRALASPRSLNYPLQCIKRSSVRMESSNFSSGVRT) directs the protein to the mitochondrion. 66 to 74 (GLDRSGKST) lines the ATP pocket.

This sequence belongs to the thymidylate kinase family. As to expression, expressed in root, rosette leaves, flower buds, flowers and siliques.

Its subcellular location is the mitochondrion. It is found in the cytoplasm. It localises to the nucleus. The protein resides in the nucleoplasm. It catalyses the reaction dTMP + ATP = dTDP + ADP. Its pathway is pyrimidine metabolism; dTTP biosynthesis. Its function is as follows. Catalyzes the conversion of dTMP to dTDP. Involved in the regulation of DNA replication. Is essential to promote the first division of the zygote. This chain is Thymidylate kinase, found in Arabidopsis thaliana (Mouse-ear cress).